A 158-amino-acid polypeptide reads, in one-letter code: NAD(P)H-quinone oxidoreductase subunit N (158 aa).

The protein belongs to the complex I NdhN subunit family. NDH-1 can be composed of about 15 different subunits; different subcomplexes with different compositions have been identified which probably have different functions.

The protein localises to the cellular thylakoid membrane. It carries out the reaction a plastoquinone + NADH + (n+1) H(+)(in) = a plastoquinol + NAD(+) + n H(+)(out). The enzyme catalyses a plastoquinone + NADPH + (n+1) H(+)(in) = a plastoquinol + NADP(+) + n H(+)(out). Functionally, NDH-1 shuttles electrons from an unknown electron donor, via FMN and iron-sulfur (Fe-S) centers, to quinones in the respiratory and/or the photosynthetic chain. The immediate electron acceptor for the enzyme in this species is believed to be plastoquinone. Couples the redox reaction to proton translocation, and thus conserves the redox energy in a proton gradient. Cyanobacterial NDH-1 also plays a role in inorganic carbon-concentration. This is NAD(P)H-quinone oxidoreductase subunit N from Microcystis aeruginosa (strain NIES-843 / IAM M-2473).